A 402-amino-acid polypeptide reads, in one-letter code: Argininosuccinate synthase (402 aa).

9–17 (AYSGGLDTS) provides a ligand contact to ATP. Tyr86 serves as a coordination point for L-citrulline. Gly116 provides a ligand contact to ATP. Residues Thr118, Asn122, and Asp123 each contribute to the L-aspartate site. Asn122 serves as a coordination point for L-citrulline. L-citrulline-binding residues include Arg126, Ser174, Ser183, Glu259, and Tyr271.

This sequence belongs to the argininosuccinate synthase family. Type 1 subfamily. Homotetramer.

It is found in the cytoplasm. It catalyses the reaction L-citrulline + L-aspartate + ATP = 2-(N(omega)-L-arginino)succinate + AMP + diphosphate + H(+). The protein operates within amino-acid biosynthesis; L-arginine biosynthesis; L-arginine from L-ornithine and carbamoyl phosphate: step 2/3. This Geobacillus sp. (strain WCH70) protein is Argininosuccinate synthase.